A 118-amino-acid chain; its full sequence is Small ribosomal subunit protein uS13 (118 aa).

The interval 94-118 (SLPVHGQRTKTNARTCKGPRKPIKK) is disordered.

Belongs to the universal ribosomal protein uS13 family. Part of the 30S ribosomal subunit. Forms a loose heterodimer with protein S19. Forms two bridges to the 50S subunit in the 70S ribosome.

Located at the top of the head of the 30S subunit, it contacts several helices of the 16S rRNA. In the 70S ribosome it contacts the 23S rRNA (bridge B1a) and protein L5 of the 50S subunit (bridge B1b), connecting the 2 subunits; these bridges are implicated in subunit movement. Contacts the tRNAs in the A and P-sites. The chain is Small ribosomal subunit protein uS13 from Buchnera aphidicola subsp. Acyrthosiphon pisum (strain 5A).